The chain runs to 443 residues: Xaa-Pro dipeptidase (443 aa).

Mn(2+)-binding residues include D246, D257, H339, E384, and E423.

This sequence belongs to the peptidase M24B family. Bacterial-type prolidase subfamily. Mn(2+) serves as cofactor.

It catalyses the reaction Xaa-L-Pro dipeptide + H2O = an L-alpha-amino acid + L-proline. Its function is as follows. Splits dipeptides with a prolyl residue in the C-terminal position. The polypeptide is Xaa-Pro dipeptidase (Escherichia coli O8 (strain IAI1)).